The chain runs to 100 residues: Small ribosomal subunit protein uS14c (100 aa).

Belongs to the universal ribosomal protein uS14 family. Part of the 30S ribosomal subunit.

It is found in the plastid. Functionally, binds 16S rRNA, required for the assembly of 30S particles. The sequence is that of Small ribosomal subunit protein uS14c (rps14) from Cuscuta gronovii (Common dodder).